The sequence spans 816 residues: MSHIRFFPRHRLALACMLASVSSFSFAQNQCAVADLQQSRDLAAAVSGAEYDCYHAWFSAPSATLNDIYSEASLSRIQVALDQEIARYRGEAEQARVLENLGEFVRAAYYVRYNAGTGTPEFSEALSQRFAQSTNLFLNNPHALDQGREQVGAMKSLTLMVDNVKQLPLTMDSMMAALMHFNRDTAKDTQWVDGLNNLFRSMAGHAANDAFYRYMANNTHHIDTLARFASDNAWALDTDANFIVFNALRETGRLLASPDQETKRKALAVMQQVMQRYPLGSEHDKLWLAAVEMMSYYAPEGLNGLNLEQAKQDLAARVMPNRFECQGPAIIRSEDLTDAQAAKACEVLAAKEADFHQVANTGNQPVADDLNDRVEVAVFASNDSYVDYSSFLFGNTTDNGGQYLEGTPSRADNTARFVAYRYANGEDLSILNLEHEYTHYLDARFNQYGSFSDNLAHGHIVWWLEGFAEYMHYKQGYKAAIDLIPSGKLSLSTVFDTTYSHDSNRIYRWGYLAVRFMLENHPQDVESLLALSRSGQFAQWAQQVTVLGQQYDAEFERWLDTLEVVVEPEQPGTDPEEPSEPTDPEVQVTELAANQSLQLSGEAYSEKLFYVDVPANTVRFNVSIEGAGDADLYMSYNKVAHYYDFEMSQYADGSNEEIQFAPEQNGYVKAGRYYISLTGRDSYDSVNLVAALEVEAQTPPTQVQDDLAPVVLESGEAKVLTVHQQRYAAVYVPEGVKEVRVWMSSQSNANDPYGAGNVDLYASRKHWPTAEQHEYASNYAGSNEYLAIPVTEAGYVHFSLQAPQQGDDVEMLVYFF.

The signal sequence occupies residues 1 to 27; that stretch reads MSHIRFFPRHRLALACMLASVSSFSFA. H435 provides a ligand contact to Zn(2+). Residue E436 is part of the active site. H439 lines the Zn(2+) pocket.

This sequence belongs to the peptidase M9A family. The cofactor is Zn(2+).

Its subcellular location is the secreted. It carries out the reaction Digestion of native collagen in the triple helical region at Xaa-|-Gly bonds. With synthetic peptides, a preference is shown for Gly at P3 and P1', Pro and Ala at P2 and P2', and hydroxyproline, Ala or Arg at P3'.. Its function is as follows. Possesses gelatinolytic activity. Can cause weak haemolysis on blood agar. The sequence is that of Microbial collagenase (prt) from Vibrio parahaemolyticus serotype O3:K6 (strain RIMD 2210633).